The sequence spans 883 residues: Valine--tRNA ligase (883 aa).

The 'HIGH' region signature appears at Pro46 to His56. The 'KMSKS' region motif lies at Lys520 to Ser524. Lys523 is a binding site for ATP. A coiled-coil region spans residues Leu809 to Arg844.

It belongs to the class-I aminoacyl-tRNA synthetase family. ValS type 1 subfamily. Monomer.

The protein resides in the cytoplasm. The catalysed reaction is tRNA(Val) + L-valine + ATP = L-valyl-tRNA(Val) + AMP + diphosphate. Catalyzes the attachment of valine to tRNA(Val). As ValRS can inadvertently accommodate and process structurally similar amino acids such as threonine, to avoid such errors, it has a 'posttransfer' editing activity that hydrolyzes mischarged Thr-tRNA(Val) in a tRNA-dependent manner. The protein is Valine--tRNA ligase of Streptococcus thermophilus (strain CNRZ 1066).